Here is a 398-residue protein sequence, read N- to C-terminus: uncharacterized protein (398 aa).

A run of 6 helical transmembrane segments spans residues 37–57 (LVILTIVAFFWGLLGVIFVQF), 92–112 (IFNAIFWLTQILFNVPFFIFG), 122–142 (LLTLYFVAVSNLFGFFFSYIP), 186–206 (LFYGLIWGFLQAVFYSVILII), 228–248 (IGGILMLINTVSFIIGYVIGT), and 268–288 (FGVAFFLSPNLVFTLLMNIVL).

It is found in the cell membrane. This is an uncharacterized protein from Mycoplasma genitalium (strain ATCC 33530 / DSM 19775 / NCTC 10195 / G37) (Mycoplasmoides genitalium).